The primary structure comprises 95 residues: Complement inhibitor RaCI5 (95 aa).

A signal peptide spans methionine 1–serine 21. 3 disulfides stabilise this stretch: cysteine 35–cysteine 59, cysteine 40–cysteine 61, and cysteine 55–cysteine 76.

The protein belongs to the RaCI family. As to expression, expressed in salivary glands.

The protein resides in the secreted. Its function is as follows. Complement inhibitor. Prevents complement-mediated C5 activation by binding to C5. Binds C5 at a different binding site than the other tick complement inhibitors OmCI and CirpT1, and the drug eculizumab. The polypeptide is Complement inhibitor RaCI5 (Rhipicephalus appendiculatus (Brown ear tick)).